Here is a 122-residue protein sequence, read N- to C-terminus: Large ribosomal subunit protein uL14 (122 aa).

This sequence belongs to the universal ribosomal protein uL14 family. As to quaternary structure, part of the 50S ribosomal subunit. Forms a cluster with proteins L3 and L19. In the 70S ribosome, L14 and L19 interact and together make contacts with the 16S rRNA in bridges B5 and B8.

In terms of biological role, binds to 23S rRNA. Forms part of two intersubunit bridges in the 70S ribosome. The sequence is that of Large ribosomal subunit protein uL14 from Salinispora tropica (strain ATCC BAA-916 / DSM 44818 / JCM 13857 / NBRC 105044 / CNB-440).